The primary structure comprises 299 residues: MMRHLISIGDLDREDINYILKKAEEFEDVARGEKKLRILEGKILGNLFFEPSTRTRMSFETAMKRLGGDVINMTAQEASSIAKGETLADTIRVVSGYCDAIVIRHPLEGAARFAAENSSVPVINAGDGAGQHPTQTLLDLYTIKKECGRLDGITIALMGDLKYSRTIHSLIKALALFDMRIYLISPEALALPEDIIEDVSAEIRRARLEEVISEIDVLYVTRIQKERFPDEEEYRKVSGSYRITAETLKSAKDSMIVMHPLPRVDEIHPSVDSTKHARYFQQSFYGVPVRMAILSEVML.

2 residues coordinate carbamoyl phosphate: R54 and T55. An L-aspartate-binding site is contributed by K83. Carbamoyl phosphate is bound by residues R104, H132, and Q135. L-aspartate contacts are provided by R165 and R222. Residues L261 and P262 each contribute to the carbamoyl phosphate site.

Belongs to the aspartate/ornithine carbamoyltransferase superfamily. ATCase family. In terms of assembly, heterooligomer of catalytic and regulatory chains.

It carries out the reaction carbamoyl phosphate + L-aspartate = N-carbamoyl-L-aspartate + phosphate + H(+). It participates in pyrimidine metabolism; UMP biosynthesis via de novo pathway; (S)-dihydroorotate from bicarbonate: step 2/3. Catalyzes the condensation of carbamoyl phosphate and aspartate to form carbamoyl aspartate and inorganic phosphate, the committed step in the de novo pyrimidine nucleotide biosynthesis pathway. The polypeptide is Aspartate carbamoyltransferase catalytic subunit (Archaeoglobus fulgidus (strain ATCC 49558 / DSM 4304 / JCM 9628 / NBRC 100126 / VC-16)).